We begin with the raw amino-acid sequence, 214 residues long: tRNA (guanine-N(7)-)-methyltransferase (214 aa).

4 residues coordinate S-adenosyl-L-methionine: Glu44, Glu69, Asp96, and Asp118. Asp118 is an active-site residue. Residues Lys122, Asp154, and Thr191 to Glu194 each bind substrate.

This sequence belongs to the class I-like SAM-binding methyltransferase superfamily. TrmB family.

The catalysed reaction is guanosine(46) in tRNA + S-adenosyl-L-methionine = N(7)-methylguanosine(46) in tRNA + S-adenosyl-L-homocysteine. It participates in tRNA modification; N(7)-methylguanine-tRNA biosynthesis. In terms of biological role, catalyzes the formation of N(7)-methylguanine at position 46 (m7G46) in tRNA. The polypeptide is tRNA (guanine-N(7)-)-methyltransferase (Listeria welshimeri serovar 6b (strain ATCC 35897 / DSM 20650 / CCUG 15529 / CIP 8149 / NCTC 11857 / SLCC 5334 / V8)).